The sequence spans 161 residues: Nucleotide-binding protein Pput_4372 (161 aa).

This sequence belongs to the YajQ family.

Functionally, nucleotide-binding protein. This is Nucleotide-binding protein Pput_4372 from Pseudomonas putida (strain ATCC 700007 / DSM 6899 / JCM 31910 / BCRC 17059 / LMG 24140 / F1).